Consider the following 473-residue polypeptide: BTB/POZ domain-containing protein KCTD8 (473 aa).

Residues 1-36 (MALKDTGSGGSTILPISEMVSSSSSPGASAAAAPGP) are disordered. Low complexity predominate over residues 21–35 (SSSSSPGASAAAAPG). One can recognise a BTB domain in the interval 44 to 122 (EVVELNVGGQ…LRDKQLALPE (79 aa)). Phosphoserine is present on S78. Omega-N-methylarginine is present on R80. Positions 326–409 (IVSPKQEHED…WIPPPDKRRN (84 aa)) are disordered. The segment covering 330–346 (KQEHEDRKHDKVTDKGS) has biased composition (basic and acidic residues). Over residues 347–388 (ESGTSCNELSTSSCDSHSEASTPQDNPSSAQQATAHQPNTLT) the composition is skewed to polar residues. S410 carries the post-translational modification Phosphoserine.

Interacts as a tetramer with GABRB1 and GABRB2.

The protein resides in the presynaptic cell membrane. It is found in the postsynaptic cell membrane. In terms of biological role, auxiliary subunit of GABA-B receptors that determine the pharmacology and kinetics of the receptor response. Increases agonist potency and markedly alter the G-protein signaling of the receptors by accelerating onset and promoting desensitization. The sequence is that of BTB/POZ domain-containing protein KCTD8 (KCTD8) from Homo sapiens (Human).